A 161-amino-acid chain; its full sequence is Epididymal protein 13 (161 aa).

The signal sequence occupies residues 1-23 (MHRSEPFLKMSLLILLFLGLAEA). N56 is a glycosylation site (N-linked (GlcNAc...) asparagine).

Its subcellular location is the secreted. The polypeptide is Epididymal protein 13 (Homo sapiens (Human)).